The chain runs to 280 residues: MLERAQRTLRREVRYSGVGIHFGKSATITLEPAKENTGIVFCRSDLLGEHIPALLPHVCNTGRSTTLSSGDSIIATVEHLMAALRSSNIDNVIVRCDEEEIPIGDGSSHVFMQLIHDAGVCTQNDKVSIARLSQPVYYQAQDTFLAAFPCDELKISYTLHYPQSPTIGTQYRSFVITEESFRKEIAPCRTFALYNELCFLMERGLIGGGCLENAVVFKDDGVISLGQLRFPDEPVRHKILDLIGDLSLVGRPFVAHIVAVGSGHSSNIALGRKILEVLQP.

Zn(2+) is bound by residues His-79, His-237, and Asp-241. Catalysis depends on His-264, which acts as the Proton donor.

The protein belongs to the LpxC family. Zn(2+) is required as a cofactor.

The catalysed reaction is a UDP-3-O-[(3R)-3-hydroxyacyl]-N-acetyl-alpha-D-glucosamine + H2O = a UDP-3-O-[(3R)-3-hydroxyacyl]-alpha-D-glucosamine + acetate. It functions in the pathway glycolipid biosynthesis; lipid IV(A) biosynthesis; lipid IV(A) from (3R)-3-hydroxytetradecanoyl-[acyl-carrier-protein] and UDP-N-acetyl-alpha-D-glucosamine: step 2/6. Catalyzes the hydrolysis of UDP-3-O-myristoyl-N-acetylglucosamine to form UDP-3-O-myristoylglucosamine and acetate, the committed step in lipid A biosynthesis. The polypeptide is UDP-3-O-acyl-N-acetylglucosamine deacetylase (Chlamydia abortus (strain DSM 27085 / S26/3) (Chlamydophila abortus)).